Here is a 443-residue protein sequence, read N- to C-terminus: Exodeoxyribonuclease 7 large subunit (443 aa).

It belongs to the XseA family. Heterooligomer composed of large and small subunits.

It localises to the cytoplasm. The enzyme catalyses Exonucleolytic cleavage in either 5'- to 3'- or 3'- to 5'-direction to yield nucleoside 5'-phosphates.. Bidirectionally degrades single-stranded DNA into large acid-insoluble oligonucleotides, which are then degraded further into small acid-soluble oligonucleotides. This chain is Exodeoxyribonuclease 7 large subunit, found in Vibrio vulnificus (strain YJ016).